Reading from the N-terminus, the 265-residue chain is Inositol monophosphatase 2 (265 aa).

The Mg(2+) site is built by glutamate 65, aspartate 86, leucine 88, and aspartate 89. Position 65 (glutamate 65) interacts with substrate. Residues 88-91 (LDGT), 189-191 (GSC), glutamate 208, and aspartate 216 contribute to the substrate site. A Mg(2+)-binding site is contributed by aspartate 216.

The protein belongs to the inositol monophosphatase superfamily. It depends on Mg(2+) as a cofactor. As to expression, low expression in roots, stems, leaves, flowers and young and mature green fruits. Expressed in the stem/leaf junctions, below the shoot apex and on the abaxial side of the petiole of the first expanded leaflets.

It catalyses the reaction a myo-inositol phosphate + H2O = myo-inositol + phosphate. Its pathway is polyol metabolism; myo-inositol biosynthesis; myo-inositol from D-glucose 6-phosphate: step 2/2. Functionally, responsible for the provision of inositol required for synthesis of phosphatidylinositol and polyphosphoinositides. In Solanum lycopersicum (Tomato), this protein is Inositol monophosphatase 2 (IMP2).